The primary structure comprises 495 residues: ATP synthase subunit beta (495 aa).

178 to 185 is an ATP binding site; that stretch reads GGAGVGKT.

It belongs to the ATPase alpha/beta chains family. As to quaternary structure, F-type ATPases have 2 components, CF(1) - the catalytic core - and CF(0) - the membrane proton channel. CF(1) has five subunits: alpha(3), beta(3), gamma(1), delta(1), epsilon(1). CF(0) has three main subunits: a(1), b(2) and c(9-12). The alpha and beta chains form an alternating ring which encloses part of the gamma chain. CF(1) is attached to CF(0) by a central stalk formed by the gamma and epsilon chains, while a peripheral stalk is formed by the delta and b chains.

The protein localises to the cell membrane. The catalysed reaction is ATP + H2O + 4 H(+)(in) = ADP + phosphate + 5 H(+)(out). In terms of biological role, produces ATP from ADP in the presence of a proton gradient across the membrane. The catalytic sites are hosted primarily by the beta subunits. This is ATP synthase subunit beta from Bifidobacterium animalis subsp. lactis (strain AD011).